Consider the following 599-residue polypeptide: Beta-(1--&gt;2)glucan export ATP-binding/permease protein NdvA (599 aa).

One can recognise an ABC transmembrane type-1 domain in the interval 21–301 (TITMCVASVL…ISAFINQTVT (281 aa)). Transmembrane regions (helical) follow at residues 22–42 (ITMC…PVLF), 55–75 (IFSP…AAVF), 156–176 (MRMS…GQLV), 248–268 (MAST…VTKG), and 276–296 (IAFI…SAFI). An ABC transporter domain is found at 335-569 (IVFDNVTYEF…GGRFSDLLRA (235 aa)). ATP is bound at residue 368-375 (GPTGAGKT).

This sequence belongs to the ABC transporter superfamily. Beta-(1--&gt;2)glucan exporter (TC 3.A.1.108.1) family. In terms of assembly, homodimer.

It is found in the cell inner membrane. It catalyses the reaction [(1-&gt;2)-beta-D-glucosyl](n)(in) + ATP + H2O = [(1-&gt;2)-beta-D-glucosyl](n)(out) + ADP + phosphate + H(+). Involved in beta-(1--&gt;2)glucan export. Its export to the periplasmic space is required to exert its action as a virulence factor. Transmembrane domains (TMD) form a pore in the inner membrane and the ATP-binding domain (NBD) is responsible for energy generation. The polypeptide is Beta-(1--&gt;2)glucan export ATP-binding/permease protein NdvA (Brucella abortus (strain 2308)).